The following is a 484-amino-acid chain: UDP-N-acetylmuramate--L-alanine ligase (484 aa).

125 to 131 (GTHGKTT) is an ATP binding site.

The protein belongs to the MurCDEF family.

It is found in the cytoplasm. It carries out the reaction UDP-N-acetyl-alpha-D-muramate + L-alanine + ATP = UDP-N-acetyl-alpha-D-muramoyl-L-alanine + ADP + phosphate + H(+). It functions in the pathway cell wall biogenesis; peptidoglycan biosynthesis. Cell wall formation. This is UDP-N-acetylmuramate--L-alanine ligase from Buchnera aphidicola subsp. Acyrthosiphon pisum (strain 5A).